The chain runs to 81 residues: Gamma-conotoxin-like TxMEKL-0511 (81 aa).

The signal sequence occupies residues 1 to 19 (MEKLTILLLVAAVLLSIQA). Positions 20–45 (LNQEKHQRAKINLLSKRKPPAERWWR) are excised as a propeptide. 3 disulfides stabilise this stretch: cysteine 49–cysteine 63, cysteine 56–cysteine 67, and cysteine 62–cysteine 72.

The protein belongs to the conotoxin O2 superfamily. As to expression, expressed by the venom duct.

It is found in the secreted. In terms of biological role, gamma-conotoxins may act on voltage-gated non-specific cation pacemaker channels (HCN). The chain is Gamma-conotoxin-like TxMEKL-0511 from Conus textile (Cloth-of-gold cone).